Here is a 657-residue protein sequence, read N- to C-terminus: MIGTVLSNRYKIEEEIGVGGTAVVYKAMDTLLNRHVAVKVLKHEFTEDEEFVFKFKREASAAARIANANIVNIYDVGADGNVNYIVMEYVAGKTLKKLIKENGKIEFNKIIDYATQIAKALNFAHKNGIVHRDIKPHNIMVTDDDIIKVTDFGIAKASNESTITTTNKVVGSAHYLSPEQAQGIPVDCRTDIYSFGIVLYEMATGKVPYDADTPVSIALKHIQDAAVPPNELNKDIPIALNKMILRCIEKKPENRYQNANEILDELSNVKNNYVNDDEEFTRVMDPAQIQNESNPNNKLDNDDTYYNGEPYNKEQPQEEPQEENEEPKNKIKGNNMLSGKAKKALVASIIVVLILAGSALAFSMGSGIFKPNSNSVSKVKVPKIIGLSESDAKGKVEDAKLKFQVVDRVKSSKPKGTVVTCYPNEDTEVDSGTVVRVDISSGDTDQTLPSLVGLPESAARAQIKQYGCNVGSVTQEYSDDVAQGNVISQSPSEGSQIKKGMTIDLVISRGPEVKKATVPSVYGKTSDSASSILQNAGFGVNVQNKDVTNADQNGIVIEEYPNGYVNKGTTVTIVIGRFNSTAVQPPNNNNGNGNQNQNQNKTPDTNHDDSKAPTGGNNDNQNQNNTTNPNGTQPAGGNVTGTGNGNVTNTPNGTGQK.

The region spanning 10–274 (YKIEEEIGVG…ELSNVKNNYV (265 aa)) is the Protein kinase domain. ATP contacts are provided by residues 16 to 24 (IGVGGTAVV) and Lys-39. Asp-143 functions as the Proton acceptor in the catalytic mechanism. A disordered region spans residues 286-334 (PAQIQNESNPNNKLDNDDTYYNGEPYNKEQPQEEPQEENEEPKNKIKGN). Over residues 288 to 298 (QIQNESNPNNK) the composition is skewed to polar residues. 3 consecutive PASTA domains span residues 375–441 (SVSK…DISS), 443–509 (DTDQ…VISR), and 512–577 (EVKK…VIGR). The disordered stretch occupies residues 581–657 (TAVQPPNNNN…TNTPNGTGQK (77 aa)). 3 stretches are compositionally biased toward low complexity: residues 584-600 (QPPNNNNGNGNQNQNQN), 613-637 (PTGGNNDNQNQNNTTNPNGTQPAGG), and 645-657 (GNVTNTPNGTGQK).

The protein belongs to the protein kinase superfamily. Ser/Thr protein kinase family.

The catalysed reaction is L-seryl-[protein] + ATP = O-phospho-L-seryl-[protein] + ADP + H(+). The enzyme catalyses L-threonyl-[protein] + ATP = O-phospho-L-threonyl-[protein] + ADP + H(+). The chain is Probable serine/threonine-protein kinase CA_C1728 from Clostridium acetobutylicum (strain ATCC 824 / DSM 792 / JCM 1419 / IAM 19013 / LMG 5710 / NBRC 13948 / NRRL B-527 / VKM B-1787 / 2291 / W).